Here is a 250-residue protein sequence, read N- to C-terminus: Sulfate transporter CysZ (250 aa).

4 helical membrane-spanning segments follow: residues 26–46 (LFVLLPLAINLVLFVGLIYLA), 71–91 (ILWPLFVVLVALMVFFTFTML), 150–170 (LFILSFIPVVNIVAAPLWLLF), and 211–231 (IVYLVLLIPVVNILMMPAAVA).

This sequence belongs to the CysZ family.

It is found in the cell inner membrane. Functionally, high affinity, high specificity proton-dependent sulfate transporter, which mediates sulfate uptake. Provides the sulfur source for the cysteine synthesis pathway. This Pseudomonas fluorescens (strain Pf0-1) protein is Sulfate transporter CysZ.